We begin with the raw amino-acid sequence, 172 residues long: MSAQVSLELHHRISQFLFHEASLLDDWKFRDWLAQLDEEIRYTMRTTVNAQTRDRRKGVQPPTTWIFNDTKDQLERRIARLETGMAWAEEPPSRTRHLISNCQISETDIPNVFAVRVNYLLYRAQKERDETFYVGTRFDKVRRLEDDNWRLLERDIVLDQAVITSHNLSVLF.

The protein belongs to the bacterial ring-hydroxylating dioxygenase beta subunit family. This dioxygenase system consists of four proteins: the two subunits of the hydroxylase component (HcaE and HcaF), a ferredoxin (HcaC) and a ferredoxin reductase (HcaD).

The catalysed reaction is 3-phenylpropanoate + NADH + O2 + H(+) = 3-(cis-5,6-dihydroxycyclohexa-1,3-dien-1-yl)propanoate + NAD(+). It carries out the reaction (E)-cinnamate + NADH + O2 + H(+) = (2E)-3-(cis-5,6-dihydroxycyclohexa-1,3-dien-1-yl)prop-2-enoate + NAD(+). It participates in aromatic compound metabolism; 3-phenylpropanoate degradation. In terms of biological role, part of the multicomponent 3-phenylpropionate dioxygenase. Converts 3-phenylpropionic acid (PP) and cinnamic acid (CI) into 3-phenylpropionate-dihydrodiol (PP-dihydrodiol) and cinnamic acid-dihydrodiol (CI-dihydrodiol), respectively. The sequence is that of 3-phenylpropionate/cinnamic acid dioxygenase subunit beta from Escherichia coli O139:H28 (strain E24377A / ETEC).